Reading from the N-terminus, the 486-residue chain is Cardiolipin synthase A (486 aa).

2 helical membrane passes run 3–23 (TFYTVVSWLVILGYWLLIAGV) and 38–58 (MAWLLIIYILPLVGIIAYLSF). 2 PLD phosphodiesterase domains span residues 219-246 (MDLRQHRKMIMIDNYIAYTGSMNMVDPR) and 399-426 (EGGLLHTKSVLVDGELSLVGTVNLDMRS). Catalysis depends on residues His224, Lys226, Asp231, His404, Lys406, and Asp411.

Belongs to the phospholipase D family. Cardiolipin synthase subfamily. ClsA sub-subfamily.

The protein localises to the cell inner membrane. The enzyme catalyses 2 a 1,2-diacyl-sn-glycero-3-phospho-(1'-sn-glycerol) = a cardiolipin + glycerol. Functionally, catalyzes the reversible phosphatidyl group transfer from one phosphatidylglycerol molecule to another to form cardiolipin (CL) (diphosphatidylglycerol) and glycerol. This Escherichia fergusonii (strain ATCC 35469 / DSM 13698 / CCUG 18766 / IAM 14443 / JCM 21226 / LMG 7866 / NBRC 102419 / NCTC 12128 / CDC 0568-73) protein is Cardiolipin synthase A.